The sequence spans 371 residues: Peptide chain release factor 2 (371 aa).

At Gln253 the chain carries N5-methylglutamine.

Belongs to the prokaryotic/mitochondrial release factor family. Methylated by PrmC. Methylation increases the termination efficiency of RF2.

The protein localises to the cytoplasm. Peptide chain release factor 2 directs the termination of translation in response to the peptide chain termination codons UGA and UAA. This is Peptide chain release factor 2 from Mycobacterium sp. (strain JLS).